The sequence spans 1384 residues: RRP12-like protein (1384 aa).

Over residues 1–13 the composition is skewed to basic residues; the sequence is MGKFRSKLKRNGK. The segment at 1-32 is disordered; the sequence is MGKFRSKLKRNGKGKTWSRGESATSNPTQMKH. Residues 19–29 are compositionally biased toward polar residues; that stretch reads RGESATSNPTQ. Ser-82, Ser-85, Ser-96, Ser-1094, Ser-1095, Ser-1117, and Ser-1119 each carry phosphoserine. Disordered stretches follow at residues 1082–1102, 1114–1155, and 1176–1384; these read LRKK…LVSG, LADS…IRED, and SAQT…KKYK. 2 stretches are compositionally biased toward acidic residues: residues 1090–1099 and 1114–1127; these read AQEDSSDDEL and LADS…DMDA. Positions 1176 to 1191 are enriched in polar residues; that stretch reads SAQTATPAQSQKTKAQ. Ser-1221, Ser-1225, Ser-1227, Ser-1230, Ser-1250, and Ser-1251 each carry phosphoserine. Composition is skewed to polar residues over residues 1276 to 1285 and 1297 to 1315; these read SGKTTASSRY and TAGN…TSRP. Basic and acidic residues predominate over residues 1321-1334; sequence GSKKAKGDMKKSGK. Residues 1348 to 1362 are compositionally biased toward basic residues; the sequence is LNKRKRSMNSRKFKS. Positions 1369–1378 are enriched in gly residues; it reads AENGGAGGGR.

The protein belongs to the RRP12 family.

The protein localises to the nucleus. In Drosophila melanogaster (Fruit fly), this protein is RRP12-like protein.